Consider the following 258-residue polypeptide: ER membrane protein complex subunit 3 (258 aa).

The next 3 membrane-spanning stretches (helical) occupy residues 8–28 (PALR…IGIL), 123–143 (VVPQ…FILL), and 173–193 (SISW…LLLG).

This sequence belongs to the EMC3 family.

It is found in the cytoplasm. The protein localises to the membrane. This is ER membrane protein complex subunit 3 from Schizosaccharomyces pombe (strain 972 / ATCC 24843) (Fission yeast).